Reading from the N-terminus, the 483-residue chain is MRLKQDFFEQLPEFYSQVFPLGISNPHWLAWSQDAADLIEIKQPSDELLQGLSGNAHVDGASYYAQVYSGHQFGGYSPQLGDGRSIILGEALGPQGAWDVALKGAGPTPYSRHGDGRAVMRSAVREFLISEALHHLHIPTTRALAVIGSDLPVWRESQETAAITVRLAKSHIRFGHFEYFCHSERGAPAKLKQLLDFTIKQHYPDLSCDAVGYKAWFTRVVADTAKMIANWQAIGFAHGVMNTDNMSILGDTFDFGPFAFLDTFKEGFICNHSDPEGRYAFGQQPGIGLWNLQRLAQALSPIIASDDLIESLNQYQVELVKHYLLLMRGKLGLKTSAAEAEQDDHDLALIGAFTGLMERNQLDHTNTWRRFGQLDPNASHSSLRDDFVDLHGFDTWYQAYQVRLGSVDEVGLWQKERNQVNPKYILRNYLAQEAIIAVELGDLKPLHNLQRLLQNPFDEQLEFEDMAKRPPDWGQGLIMSCSS.

Residues Gly81, Gly83, Arg84, Lys103, Asp115, Gly116, Arg166, and Arg173 each contribute to the ATP site. Asp244 acts as the Proton acceptor in catalysis. Mg(2+) contacts are provided by Asn245 and Asp254. Asp254 contributes to the ATP binding site.

It belongs to the SELO family. Mg(2+) serves as cofactor. Requires Mn(2+) as cofactor.

The catalysed reaction is L-seryl-[protein] + ATP = 3-O-(5'-adenylyl)-L-seryl-[protein] + diphosphate. It catalyses the reaction L-threonyl-[protein] + ATP = 3-O-(5'-adenylyl)-L-threonyl-[protein] + diphosphate. It carries out the reaction L-tyrosyl-[protein] + ATP = O-(5'-adenylyl)-L-tyrosyl-[protein] + diphosphate. The enzyme catalyses L-histidyl-[protein] + UTP = N(tele)-(5'-uridylyl)-L-histidyl-[protein] + diphosphate. The catalysed reaction is L-seryl-[protein] + UTP = O-(5'-uridylyl)-L-seryl-[protein] + diphosphate. It catalyses the reaction L-tyrosyl-[protein] + UTP = O-(5'-uridylyl)-L-tyrosyl-[protein] + diphosphate. Its function is as follows. Nucleotidyltransferase involved in the post-translational modification of proteins. It can catalyze the addition of adenosine monophosphate (AMP) or uridine monophosphate (UMP) to a protein, resulting in modifications known as AMPylation and UMPylation. The chain is Protein nucleotidyltransferase YdiU from Shewanella pealeana (strain ATCC 700345 / ANG-SQ1).